Here is a 433-residue protein sequence, read N- to C-terminus: Energy-coupling factor transporter ATP-binding protein EcfA2 (433 aa).

An ABC transporter domain is found at 25 to 389; sequence VRVKNLYAVY…QHIINSTSIQ (365 aa). 62–69 is a binding site for ATP; sequence GNSGSGKS.

It belongs to the ABC transporter superfamily. Energy-coupling factor EcfA family. As to quaternary structure, forms a stable energy-coupling factor (ECF) transporter complex composed of 2 membrane-embedded substrate-binding proteins (S component), 2 ATP-binding proteins (A component) and 2 transmembrane proteins (T component).

The protein localises to the cell membrane. Functionally, ATP-binding (A) component of a common energy-coupling factor (ECF) ABC-transporter complex. Unlike classic ABC transporters this ECF transporter provides the energy necessary to transport a number of different substrates. This Ureaplasma parvum serovar 3 (strain ATCC 700970) protein is Energy-coupling factor transporter ATP-binding protein EcfA2.